The primary structure comprises 319 residues: 1-aminocyclopropane-1-carboxylate oxidase 4 (319 aa).

The region spanning 153-253 is the Fe2OG dioxygenase domain; it reads PNFGTKVSNY…RMSLASFYNP (101 aa). Fe cation contacts are provided by His177, Asp179, and His234.

It belongs to the iron/ascorbate-dependent oxidoreductase family. It depends on Fe cation as a cofactor.

The enzyme catalyses 1-aminocyclopropane-1-carboxylate + L-ascorbate + O2 = ethene + L-dehydroascorbate + hydrogen cyanide + CO2 + 2 H2O. It functions in the pathway alkene biosynthesis; ethylene biosynthesis via S-adenosyl-L-methionine; ethylene from S-adenosyl-L-methionine: step 2/2. This Petunia hybrida (Petunia) protein is 1-aminocyclopropane-1-carboxylate oxidase 4 (ACO4).